The following is a 1043-amino-acid chain: Beta-klotho (1043 aa).

Residues 1–994 are Extracellular-facing; that stretch reads MKTGCAAGSP…ICSFLVEKKP (994 aa). 2 glycosyl hydrolase-1 regions span residues 77–506 and 515–965; these read LYDT…DNGF and MKGR…SSGL. Asparagine 84, asparagine 122, asparagine 161, asparagine 211, asparagine 262, asparagine 308, asparagine 389, asparagine 552, asparagine 609, asparagine 700, asparagine 704, and asparagine 837 each carry an N-linked (GlcNAc...) asparagine glycan. Residues 995–1015 form a helical membrane-spanning segment; the sequence is LIFFGCCFISTLAVLLSITVF. Topologically, residues 1016–1043 are cytoplasmic; that stretch reads HHQKRRKFQKARNLQNIPLKKGHSRVFS.

Belongs to the glycosyl hydrolase 1 family. Klotho subfamily. Interacts with FGF19; this interaction is direct. Interacts (via C-terminus) with FGF21; this interaction is direct. Interacts with FGFR1 and FGFR4. In terms of tissue distribution, present in liver, muscle and white adipose tissue, but not in kidney (at protein level). Expressed in liver and pancreas, and at lower levels in skin, stomach, skeletal muscle, small intestine and lung.

The protein resides in the cell membrane. Its function is as follows. Contributes to the transcriptional repression of cholesterol 7-alpha-hydroxylase (CYP7A1), the rate-limiting enzyme in bile acid synthesis. Probably inactive as a glycosidase. Increases the ability of FGFR1 and FGFR4 to bind FGF21. This is Beta-klotho (Klb) from Mus musculus (Mouse).